The primary structure comprises 295 residues: Aquaporin-9 (295 aa).

The Cytoplasmic portion of the chain corresponds to 1 to 24; sequence MPSEKDRAKKNLVQRLALKSCLAK. The chain crosses the membrane as a helical span at residues 25-43; sequence ETLSEFLGTFIMIVLGCGS. Topologically, residues 44-57 are extracellular; it reads IAQAVLSREKAGGI. Residues 58–77 form a helical membrane-spanning segment; sequence ITINIGFATAVVMALYATFG. The Cytoplasmic segment spans residues 78–79; that stretch reads VS. An intramembrane region (discontinuously helical) is located at residues 80–92; that stretch reads GGHINPAVSFAMC. The NPA 1 motif lies at 84 to 86; the sequence is NPA. Over 93 to 98 the chain is Cytoplasmic; the sequence is TFGRME. The chain crosses the membrane as a helical span at residues 99-123; the sequence is WFKFPFYVGAQLLGAFVGAATVFGI. The Extracellular portion of the chain corresponds to 124-160; the sequence is YYDGLMAFADGKLLITGENGTAFIFATYPKPFVSVPG. Residues 161-178 traverse the membrane as a helical segment; that stretch reads AFVDQVVSTMFLLLIVFA. The Cytoplasmic segment spans residues 179 to 190; the sequence is IFDSRNLGVPRG. The helical transmembrane segment at 191-207 threads the bilayer; it reads LEPIVIGLLIIVISCSL. The Extracellular portion of the chain corresponds to 208 to 210; the sequence is GLN. The discontinuously helical intramembrane region spans 211-225; sequence SGCAMNPARDLSPRL. The short motif at 216–218 is the NPA 2 element; that stretch reads NPA. At 226-243 the chain is on the extracellular side; that stretch reads FTALAGWGFEVFTFGNNF. Residues 244 to 264 form a helical membrane-spanning segment; it reads WWIPVVGPMIGAVLGGLIYVL. At 265 to 295 the chain is on the cytoplasmic side; the sequence is FIQMHHSNPDPEVKAEPAENNLEKHELSVIM.

Belongs to the MIP/aquaporin (TC 1.A.8) family. Homotetramer; each monomer provides an independent glycerol/water pore.

Its subcellular location is the cell membrane. The protein resides in the basolateral cell membrane. It carries out the reaction glycerol(in) = glycerol(out). The catalysed reaction is H2O(in) = H2O(out). The enzyme catalyses urea(in) = urea(out). It catalyses the reaction (S)-lactate(in) = (S)-lactate(out). It carries out the reaction NH4(+)(in) = NH4(+)(out). The catalysed reaction is uracil(in) = uracil(out). The enzyme catalyses adenine(out) = adenine(in). It catalyses the reaction 3-hydroxybutanoate(in) = 3-hydroxybutanoate(out). It carries out the reaction D-sorbitol(in) = D-sorbitol(out). The catalysed reaction is D-mannitol(in) = D-mannitol(out). The enzyme catalyses H2O2(out) = H2O2(in). It catalyses the reaction arsenite(in) = arsenite(out). It carries out the reaction selenite(in) = selenite(out). Its function is as follows. Aquaglyceroporins form homotetrameric transmembrane channels, with each monomer independently mediating glycerol and water transport across the plasma membrane along their osmotic gradient. AQP9 is the primary route for glycerol uptake in hepatocytes, supporting hepatic gluconeogenesis. It exhibits broad specificity and may transport various small, non-charged solutes, including carbamides, polyols, purines, and pyrimidines. AQP9 may also facilitate hepatic urea extrusion. Due to its permeability to lactate, AQP9 might participate in the astrocyte-to-neuron lactate shuttle, supplying neurons with energy. Additionally, AQP9 is permeable to arsenite, contributing to arsenic excretion by the liver and providing partial protection against arsenic toxicity. It is also permeable to H2O2 in vivo. Could also be permeable to ammonium. This Mus musculus (Mouse) protein is Aquaporin-9.